The sequence spans 350 residues: Lipoyl synthase (350 aa).

The segment at 1–39 (MSDTSSPKPVASGEKFRTAQGITAIKDGQKRRASAEPQV) is disordered. [4Fe-4S] cluster-binding residues include cysteine 73, cysteine 78, cysteine 84, cysteine 99, cysteine 103, cysteine 106, and serine 314. The region spanning 85–303 (WSNGTATIML…RDIGLEKGFM (219 aa)) is the Radical SAM core domain.

Belongs to the radical SAM superfamily. Lipoyl synthase family. The cofactor is [4Fe-4S] cluster.

It is found in the cytoplasm. It catalyses the reaction [[Fe-S] cluster scaffold protein carrying a second [4Fe-4S](2+) cluster] + N(6)-octanoyl-L-lysyl-[protein] + 2 oxidized [2Fe-2S]-[ferredoxin] + 2 S-adenosyl-L-methionine + 4 H(+) = [[Fe-S] cluster scaffold protein] + N(6)-[(R)-dihydrolipoyl]-L-lysyl-[protein] + 4 Fe(3+) + 2 hydrogen sulfide + 2 5'-deoxyadenosine + 2 L-methionine + 2 reduced [2Fe-2S]-[ferredoxin]. The protein operates within protein modification; protein lipoylation via endogenous pathway; protein N(6)-(lipoyl)lysine from octanoyl-[acyl-carrier-protein]: step 2/2. In terms of biological role, catalyzes the radical-mediated insertion of two sulfur atoms into the C-6 and C-8 positions of the octanoyl moiety bound to the lipoyl domains of lipoate-dependent enzymes, thereby converting the octanoylated domains into lipoylated derivatives. The polypeptide is Lipoyl synthase (Ectopseudomonas mendocina (strain ymp) (Pseudomonas mendocina)).